Reading from the N-terminus, the 318-residue chain is Transcription factor MYBS3 (318 aa).

Disordered regions lie at residues 1–20 (MTRRCSHCSHNGHNSRTCPN) and 50–98 (AAGS…PWTE). The segment at 3 to 20 (RRCSHCSHNGHNSRTCPN) adopts a CCHC-type zinc-finger fold. Residues 8-18 (CSHNGHNSRTC) show a composition bias toward polar residues. The segment covering 50–77 (AAGSTSGGASPADGPDAAPTAADGYASD) has biased composition (low complexity). The 57-residue stretch at 88–144 (RDRKKGVPWTEEEHRRFLLGLQKLGKGDWRGISRNFVVSRTPTQVASHAQKYFIRQS) folds into the HTH myb-type domain. Residues 116–140 (WRGISRNFVVSRTPTQVASHAQKYF) constitute a DNA-binding region (H-T-H motif). A disordered region spans residues 159–200 (VPDESMDLPPLPGGQEPETQVLNQPALPPPREEEEVDSMESD).

In terms of tissue distribution, expressed in all tissues, with the highest level in senescent leaves.

It is found in the nucleus. In terms of biological role, transcription repressor that binds to 5'-TATCCA-3' elements in gene promoters. Contributes to the sugar-repressed transcription of promoters containing SRS or 5'-TATCCA-3' elements. Transcription repressor involved in a cold stress response pathway that confers cold tolerance. Suppresses the DREB1-dependent signaling pathway under prolonged cold stress. DREB1 responds quickly and transiently while MYBS3 responds slowly to cold stress. They may act sequentially and complementarily for adaptation to short- and long-term cold stress. This is Transcription factor MYBS3 from Oryza sativa subsp. japonica (Rice).